The primary structure comprises 208 residues: AN1-type zinc finger protein 6 (208 aa).

An A20-type zinc finger spans residues 8–42 (SQVPMLCSTGCGFYGNPRTNGMCSVCYKEHLQRQN). The Zn(2+) site is built by C14, C18, C30, and C33. The segment at 41–110 (QNSSNGRISP…ASSQVDSTSV (70 aa)) is disordered. The residue at position 49 (S49) is a Phosphoserine. Positions 54-68 (SVTSLSESLPVQCTD) are enriched in polar residues. The segment covering 83–94 (SSVQPSPVSNQS) has biased composition (low complexity). Polar residues predominate over residues 95 to 110 (LLSESVASSQVDSTSV). An AN1-type zinc finger spans residues 143-189 (KQKKNRCFMCRKKVGLTGFECRCGNVYCGVHRYSDVHNCSYNYKADA). Residues C149, C152, C163, C165, C170, H173, H179, and C181 each contribute to the Zn(2+) site. K204 carries the post-translational modification N6-acetyllysine.

As to quaternary structure, interacts with PKN1.

This is AN1-type zinc finger protein 6 (ZFAND6) from Bos taurus (Bovine).